The chain runs to 174 residues: Ribosome maturation factor RimM (174 aa).

The 75-residue stretch at 98 to 172 (AGEYYYHQIV…VVTVELMEGL (75 aa)) folds into the PRC barrel domain.

It belongs to the RimM family. Binds ribosomal protein uS19.

The protein localises to the cytoplasm. An accessory protein needed during the final step in the assembly of 30S ribosomal subunit, possibly for assembly of the head region. Essential for efficient processing of 16S rRNA. May be needed both before and after RbfA during the maturation of 16S rRNA. It has affinity for free ribosomal 30S subunits but not for 70S ribosomes. This Lactiplantibacillus plantarum (strain ATCC BAA-793 / NCIMB 8826 / WCFS1) (Lactobacillus plantarum) protein is Ribosome maturation factor RimM.